Consider the following 150-residue polypeptide: DNA-directed RNA polymerases I, II, and III subunit RPABC3 (150 aa).

Residue alanine 2 is modified to N-acetylalanine.

It belongs to the eukaryotic RPB8 RNA polymerase subunit family. In terms of assembly, component of the RNA polymerase I (Pol I), RNA polymerase II (Pol II) and RNA polymerase III (Pol III) complexes consisting of at least 13, 12 and 17 subunits, respectively. Pol I complex consists of a ten-subunit catalytic core composed of POLR1A/RPA1, POLR1B/RPA2, POLR1C/RPAC1, POLR1D/RPAC2, POLR1H/RPA12, POLR2E/RPABC1, POLR2F/RPABC2, POLR2H/RPABC3, POLR2K/RPABC4 and POLR2L/RPABC5; a mobile stalk subunit POLR1F/RPA43 protruding from the core and additional subunits homologous to general transcription factors POLR1E/RPA49 and POLR1G/RPA34. Part of Pol I pre-initiation complex (PIC), in which Pol I core assembles with RRN3 and promoter-bound UTBF and SL1/TIF-IB complex. Pol II complex contains a ten-subunit catalytic core composed of POLR2A/RPB1, POLR2B/RPB2, POLR2C/RPB3, POLR2I/RPB9, POLR2J/RPB11, POLR2E/RPABC1, POLR2F/RPABC2, POLR2H/RPABC3, POLR2K/RPABC4 and POLR2L/RPABC5 and a mobile stalk composed of two subunits POLR2D/RPB4 and POLR2G/RPB7. Part of Pol II(G) complex, in which Pol II core associates with an additional subunit POLR2M; unlike conventional Pol II, Pol II(G) functions as a transcriptional repressor. Part of Pol II pre-initiation complex (PIC), in which Pol II core assembles with Mediator, general transcription factors and other specific initiation factors including GTF2E1, GTF2E2, GTF2F1, GTF2F2, TCEA1, ERCC2, ERCC3, GTF2H2, GTF2H3, GTF2H4, GTF2H5, GTF2A1, GTF2A2, GTF2B and TBP; this large multi-subunit PIC complex mediates DNA unwinding and targets Pol II core to the transcription start site where the first phosphodiester bond forms. Directly interacts with POLR2A. Pol III complex consists of a ten-subunit catalytic core composed of POLR3A/RPC1, POLR3B/RPC2, POLR1C/RPAC1, POLR1D/RPAC2, POLR3K/RPC10, POLR2E/RPABC1, POLR2F/RPABC2, POLR2H/RPABC3, POLR2K/RPABC4 and POLR2L/RPABC5; a mobile stalk composed of two subunits POLR3H/RPC8 and CRCP/RPC9, protruding from the core and functioning primarily in transcription initiation; and additional subunits homologous to general transcription factors of the RNA polymerase II machinery, POLR3C/RPC3-POLR3F/RPC6-POLR3G/RPC7 heterotrimer required for transcription initiation and POLR3D/RPC4-POLR3E/RPC5 heterodimer involved in both transcription initiation and termination.

It is found in the nucleus. The protein resides in the nucleolus. Its function is as follows. DNA-dependent RNA polymerase catalyzes the transcription of DNA into RNA using the four ribonucleoside triphosphates as substrates. Common component of RNA polymerases I, II and III which synthesize ribosomal RNA precursors, mRNA precursors and many functional non-coding RNAs, and small RNAs, such as 5S rRNA and tRNAs, respectively. This chain is DNA-directed RNA polymerases I, II, and III subunit RPABC3 (POLR2H), found in Bos taurus (Bovine).